The chain runs to 311 residues: Dihydroorotate dehydrogenase A (fumarate) (311 aa).

Residues serine 19 and 43 to 44 each bind FMN; that span reads KS. Residues lysine 43, 67 to 71, and asparagine 127 contribute to the substrate site; that span reads NSMGL. Asparagine 127 lines the FMN pocket. Cysteine 130 acts as the Nucleophile in catalysis. The FMN site is built by lysine 164 and valine 192. 193-194 is a binding site for substrate; it reads NS. FMN contacts are provided by residues glycine 221, 249 to 250, and 271 to 272; these read GG and GT.

This sequence belongs to the dihydroorotate dehydrogenase family. Type 1 subfamily. In terms of assembly, homodimer. The cofactor is FMN.

Its subcellular location is the cytoplasm. The catalysed reaction is (S)-dihydroorotate + fumarate = orotate + succinate. The protein operates within pyrimidine metabolism; UMP biosynthesis via de novo pathway. Its function is as follows. Catalyzes the conversion of dihydroorotate to orotate with fumarate as the electron acceptor. The polypeptide is Dihydroorotate dehydrogenase A (fumarate) (pyrDA) (Lactococcus lactis subsp. cremoris (Streptococcus cremoris)).